The following is a 149-amino-acid chain: Oocyte-expressed protein homolog (149 aa).

The tract at residues methionine 1 to glutamate 22 is disordered. Positions proline 49–leucine 110 constitute a KH; atypical domain.

This sequence belongs to the KHDC1 family. Component of the subcortical maternal complex (SCMC), at least composed of NLRP5, KHDC3L, OOEP, and TLE6 isoform 1. Within the complex, interacts with NLRP5, KHDC3L and TLE6 isoform 1. As part of the SCMC interacts with the SCMC-associated protein NLRP4F. The SCMC may facilitate translocation of its components between the nuclear and cytoplasmic compartments. Forms a scaffold complex with KHDC3L/FILIA, and interacts with BLM and TRIM25 at DNA replication forks.

It is found in the cytoplasm. It localises to the nucleus. Component of the subcortical maternal complex (SCMC), a multiprotein complex that plays a key role in early embryonic development. The SCMC complex is a structural constituent of cytoplasmic lattices, which consist in fibrous structures found in the cytoplasm of oocytes and preimplantation embryos. They are required to store maternal proteins critical for embryonic development, such as proteins that control epigenetic reprogramming of the preimplantation embryo, and prevent their degradation or activation. As part of the OOEP-KHDC3 scaffold, recruits BLM and TRIM25 to DNA replication forks, thereby promoting the ubiquitination of BLM by TRIM25, enhancing BLM retainment at replication forks and therefore promoting stalled replication fork restart. Positively regulates the homologous recombination-mediated DNA double-strand break (DSB) repair pathway by regulating ATM activation and RAD51 recruitment to DSBs in oocytes. Thereby contributes to oocyte survival and the resumption and completion of meiosis. The chain is Oocyte-expressed protein homolog from Homo sapiens (Human).